Here is a 94-residue protein sequence, read N- to C-terminus: Integration host factor subunit beta (94 aa).

It belongs to the bacterial histone-like protein family. As to quaternary structure, heterodimer of an alpha and a beta chain.

Its function is as follows. This protein is one of the two subunits of integration host factor, a specific DNA-binding protein that functions in genetic recombination as well as in transcriptional and translational control. This is Integration host factor subunit beta from Caulobacter sp. (strain K31).